Consider the following 1230-residue polypeptide: SAM and SH3 domain-containing protein 1 (1230 aa).

Residues 1-10 show a composition bias toward low complexity; that stretch reads MEEDAGAASP. The interval 1-30 is disordered; the sequence is MEEDAGAASPAPEPEPEVDPARELEPEAGV. 2 positions are modified to phosphoserine: serine 83 and serine 241. 2 disordered regions span residues 211–249 and 275–337; these read RQSSTLDPADWPDGSYPTLDGSSTCNSREQSDDETEDSV and KKPS…LDTW. Over residues 275–297 the composition is skewed to basic and acidic residues; sequence KKPSAEGGEEHVFENSPVQDERS. Low complexity predominate over residues 324-336; it reads SLTPSPSSSSLDT. Serine 400 bears the Phosphoserine mark. Disordered stretches follow at residues 439 to 566, 610 to 633, and 705 to 792; these read PRIS…YDTD, EEKPKRPTRRRKKGRPSQPKSVED, and VDNQ…KSCD. Residues 461-470 are compositionally biased toward polar residues; sequence KYSSPVSEQD. The segment covering 485–494 has biased composition (basic and acidic residues); that stretch reads PDSEHVDKPK. Over residues 498–516 the composition is skewed to low complexity; that stretch reads GGSVESLRSSLSGQSSMSG. A compositionally biased stretch (polar residues) spans 517–529; the sequence is QTVSTTDSSTSNR. The SH3 domain occupies 547-608; sequence PFCGRARVHT…KFIYVDVLNE (62 aa). Residues 615-624 are compositionally biased toward basic residues; it reads RPTRRRKKGR. An SAM 1 domain is found at 626-690; sequence SQPKSVEDLL…LTAVELLQEY (65 aa). A compositionally biased stretch (polar residues) spans 737-758; that stretch reads VLSTKSSTESNLKSFTRSQPGN. Over residues 768-779 the composition is skewed to basic and acidic residues; the sequence is GEVRKQGEEGRL. A phosphoserine mark is found at serine 813 and serine 831. Disordered regions lie at residues 818 to 875 and 915 to 1045; these read EGPE…LPRG and PPQC…PWLA. The required for interaction with TRAF6 stretch occupies residues 844–852; the sequence is NVPTEMPET. The span at 852–868 shows a compositional bias: polar residues; sequence TCSQNVPEVPQKTSACT. The segment covering 940-956 has biased composition (basic and acidic residues); that stretch reads GLRKGHDHHPLGTKEGV. Over residues 962-972 the composition is skewed to polar residues; it reads APETRTQSRHP. The segment covering 1008–1019 has biased composition (low complexity); that stretch reads SPASPVSPSDCP. Residues 1160–1224 enclose the SAM 2 domain; that stretch reads GCVASMSDWL…ITAARLFKLP (65 aa).

In terms of assembly, interacts with GNAS. Interacts with IQGAP1. Interacts with TRAF6 (via C-terminus); the interaction is LPS-dependent. Interacts with MAP3K7, CHUK and IKBKB. Expressed in the microvascular endothelium of various organs, as well as in parenchymal cells. Expressed in the endothelium but not lymphoid cells of spleen and thymus.

It is found in the cytoplasm. Its function is as follows. Is a positive regulator of NF-kappa-B signaling downstream of TLR4 activation. It acts as a scaffold molecule to assemble a molecular complex that includes TRAF6, MAP3K7, CHUK and IKBKB, thereby facilitating NF-kappa-B signaling activation. Regulates TRAF6 and MAP3K7 ubiquitination. Involved in the regulation of cell mobility. Regulates lipolysaccharide (LPS)-induced endothelial cell migration. Is involved in the regulation of skin pigmentation through the control of melanocyte migration in the epidermis. This is SAM and SH3 domain-containing protein 1 (Sash1) from Mus musculus (Mouse).